The chain runs to 158 residues: MSYTVIYAGTFDPMTNGHLDIIERASELFGQVIVAVAKNPSKQPLFSFEERTALVRQSCAHLANVQAVGFSGLLADFAKQHQAKALVRGIRGSDDIEYEIQLAQLNDKLSGRLDTVFLPPSVTWRYLSSTMVREIYRHQGDVAQFVPNAVLCALKEKE.

A substrate-binding site is contributed by Thr-10. ATP is bound by residues Thr-10–Phe-11 and His-18. The substrate site is built by Lys-42, Leu-74, and Arg-88. Residues Gly-89 to Arg-91, Glu-99, and Trp-124 to Thr-130 each bind ATP.

This sequence belongs to the bacterial CoaD family. In terms of assembly, homohexamer. Mg(2+) is required as a cofactor.

It is found in the cytoplasm. The enzyme catalyses (R)-4'-phosphopantetheine + ATP + H(+) = 3'-dephospho-CoA + diphosphate. It functions in the pathway cofactor biosynthesis; coenzyme A biosynthesis; CoA from (R)-pantothenate: step 4/5. Functionally, reversibly transfers an adenylyl group from ATP to 4'-phosphopantetheine, yielding dephospho-CoA (dPCoA) and pyrophosphate. This is Phosphopantetheine adenylyltransferase from Actinobacillus pleuropneumoniae serotype 5b (strain L20).